The sequence spans 485 residues: Membrane-bound lytic murein transglycosylase F (485 aa).

Positions 1–29 (MFAHTALRQRCAKWLFATGLFLLLGACVE) are cleaved as a signal peptide. Positions 30-267 (KPSTLERVKE…RLKDRYYGHV (238 aa)) are non-LT domain. The segment at 268–485 (DVLGYVGAYT…DKPAEQSPPM (218 aa)) is LT domain. Residue E314 is part of the active site. Residues 465–485 (EGNLHVPGVNKDKPAEQSPPM) form a disordered region.

It in the N-terminal section; belongs to the bacterial solute-binding protein 3 family. This sequence in the C-terminal section; belongs to the transglycosylase Slt family.

It localises to the cell outer membrane. The enzyme catalyses Exolytic cleavage of the (1-&gt;4)-beta-glycosidic linkage between N-acetylmuramic acid (MurNAc) and N-acetylglucosamine (GlcNAc) residues in peptidoglycan, from either the reducing or the non-reducing ends of the peptidoglycan chains, with concomitant formation of a 1,6-anhydrobond in the MurNAc residue.. Murein-degrading enzyme that degrades murein glycan strands and insoluble, high-molecular weight murein sacculi, with the concomitant formation of a 1,6-anhydromuramoyl product. Lytic transglycosylases (LTs) play an integral role in the metabolism of the peptidoglycan (PG) sacculus. Their lytic action creates space within the PG sacculus to allow for its expansion as well as for the insertion of various structures such as secretion systems and flagella. The polypeptide is Membrane-bound lytic murein transglycosylase F (Pseudomonas putida (strain W619)).